Here is a 560-residue protein sequence, read N- to C-terminus: Membrane protein insertase YidC (560 aa).

The helical transmembrane segment at 1–21 (MDIKRTILIAALAVVSYVMVL) threads the bilayer. Positions 42 to 66 (VAPGLPDGVPAGNNGASADVPSANA) are disordered. 5 helical membrane-spanning segments follow: residues 341-361 (LELT…FWLL), 367-387 (LLGN…GLFF), 437-457 (LGGC…YWVL), 468-488 (WILW…PIIM), and 515-535 (PIIF…YWVV).

It belongs to the OXA1/ALB3/YidC family. Type 1 subfamily. Interacts with the Sec translocase complex via SecD. Specifically interacts with transmembrane segments of nascent integral membrane proteins during membrane integration.

The protein localises to the cell inner membrane. Functionally, required for the insertion and/or proper folding and/or complex formation of integral membrane proteins into the membrane. Involved in integration of membrane proteins that insert both dependently and independently of the Sec translocase complex, as well as at least some lipoproteins. Aids folding of multispanning membrane proteins. In Pseudomonas putida (strain ATCC 700007 / DSM 6899 / JCM 31910 / BCRC 17059 / LMG 24140 / F1), this protein is Membrane protein insertase YidC.